Reading from the N-terminus, the 243-residue chain is Leucyl/phenylalanyl-tRNA--protein transferase (243 aa).

It belongs to the L/F-transferase family.

The protein resides in the cytoplasm. It catalyses the reaction N-terminal L-lysyl-[protein] + L-leucyl-tRNA(Leu) = N-terminal L-leucyl-L-lysyl-[protein] + tRNA(Leu) + H(+). It carries out the reaction N-terminal L-arginyl-[protein] + L-leucyl-tRNA(Leu) = N-terminal L-leucyl-L-arginyl-[protein] + tRNA(Leu) + H(+). The enzyme catalyses L-phenylalanyl-tRNA(Phe) + an N-terminal L-alpha-aminoacyl-[protein] = an N-terminal L-phenylalanyl-L-alpha-aminoacyl-[protein] + tRNA(Phe). In terms of biological role, functions in the N-end rule pathway of protein degradation where it conjugates Leu, Phe and, less efficiently, Met from aminoacyl-tRNAs to the N-termini of proteins containing an N-terminal arginine or lysine. The polypeptide is Leucyl/phenylalanyl-tRNA--protein transferase (Vibrio cholerae serotype O1 (strain ATCC 39315 / El Tor Inaba N16961)).